Consider the following 235-residue polypeptide: Sugar fermentation stimulation protein homolog (235 aa).

It belongs to the SfsA family.

In Aliivibrio fischeri (strain ATCC 700601 / ES114) (Vibrio fischeri), this protein is Sugar fermentation stimulation protein homolog.